A 273-amino-acid polypeptide reads, in one-letter code: SPRY domain-containing SOCS box protein 1 (273 aa).

A Phosphotyrosine modification is found at Tyr31. A B30.2/SPRY domain is found at 33–231 (KPTRLDLLLD…IRMRYLNGLD (199 aa)). The SOCS box domain maps to 232–273 (PEPLPLMDLCRRSVRLALGKERLGAIPALPLPASLKAYLLYQ).

It belongs to the SPSB family. Component of the probable ECS(SPSB1) E3 ubiquitin-protein ligase complex which contains CUL5, RNF7/RBX2, Elongin BC complex and SPSB1. Interacts with CUL5, RNF7, ELOB and ELOC. Directly interacts with MET tyrosine kinase domain in the presence and in the absence of HGF, however HGF treatment has a positive effect on this interaction. When phosphorylated, interacts with RASA1 without affecting its stability. Interacts (via B30.2/SPRY domain) with PAWR; this interaction is direct and occurs in association with the Elongin BC complex. Interacts with EPHB2. Interacts with NOS2.

It is found in the cytoplasm. The protein resides in the cytosol. It participates in protein modification; protein ubiquitination. Functionally, substrate recognition component of a SCF-like ECS (Elongin BC-CUL2/5-SOCS-box protein) E3 ubiquitin-protein ligase complex which mediates the ubiquitination and subsequent proteasomal degradation of target proteins. Negatively regulates nitric oxide (NO) production and limits cellular toxicity in activated macrophages by mediating the ubiquitination and proteasomal degradation of NOS2. Acts as a bridge which links the NOS2 with the ECS E3 ubiquitin ligase complex components ELOC and CUL5. This is SPRY domain-containing SOCS box protein 1 (Spsb1) from Mus musculus (Mouse).